Reading from the N-terminus, the 2364-residue chain is MTTTVATDYDNIEIQQQYSDVNNRWDVDDWDNENSSARLFERSRIKALADEREAVQKKTFTKWVNSHLARVSCRITDLYTDLRDGRMLIKLLEVLSGERLPKPTKGRMRIHCLENVDKALQFLKEQRVHLENMGSHDIVDGNHRLTLGLIWTIILRFQIQDISVETEDNKEKKSAKDALLLWCQMKTAGYPNVNIHNFTTSWRDGMAFNALIHKHRPDLIDFDKLKKSNAHYNLQNAFNLAEQHLGLTKLLDPEDISVDHPDEKSIITYVVTYYHYFSKMKALAVEGKRIGKVLDNAIETEKMIEKYESLASDLLEWIEQTIIILNNRKFANSLVGVQQQLQAFNTYRTVEKPPKFTEKGNLEVLLFTIQSKMRANNQKVYMPREGKLISDINKAWERLEKAEHERELALRNELIRQEKLEQLARRFDRKAAMRETWLSENQRLVSQDNFGFDLPAVEAATKKHEAIETDIAAYEERVQAVVAVARELEAENYHDIKRITARKDNVIRLWEYLLELLRARRQRLEMNLGLQKIFQEMLYIMDWMDEMKVLVLSQDYGKHLLGVEDLLQKHTLVEADIGIQAERVRGVNASAQKFATDGEGYKPCDPQVIRDRVAHMEFCYQELCQLAAERRARLEESRRLWKFFWEMAEEEGWIREKEKILSSDDYGKDLTSVMRLLSKHRAFEDEMSGRSGHFEQAIKEGEDMIAEEHFGSEKIRERIIYIREQWANLEQLSAIRKKRLEEASLLHQFQADADDIDAWMLDILKIVSSSDVGHDEYSTQSLVKKHKDVAEEIANYRPTLDTLHEQASALPQEHAESPDVRGRLSGIEERYKEVAELTRLRKQALQDTLALYKMFSEADACELWIDEKEQWLNNMQIPEKLEDLEVIQHRFESLEPEMNNQASRVAVVNQIARQLMHSGHPSEKEIKAQQDKLNTRWSQFRELVDRKKDALLSALSIQNYHLECNETKSWIREKTKVIESTQDLGNDLAGVMALQRKLTGMERDLVAIEAKLSDLQKEAEKLESEHPDQAQAILSRLAEISDVWEEMKTTLKNREASLGEASKLQQFLRDLDDFQSWLSRTQTAIASEDMPNTLTEAEKLLTQHENIKNEIDNYEEDYQKMRDMGEMVTQGQTDAQYMFLRQRLQALDTGWNELHKMWENRQNLLSQSHAYQQFLRDTKQAEAFLNNQEYVLAHTEMPTTLEGAEAAIKKQEDFMTTMDANEEKINAVVETGRRLVSDGNINSDRIQEKVDSIDDRHRKNRETASELLMRLKDNRDLQKFLQDCQELSLWINEKMLTAQDMSYDEARNLHSKWLKHQAFMAELASNKEWLDKIEKEGMQLISEKPETEAVVKEKLTGLHKMWEVLESTTQTKAQRLFDANKAELFTQSCADLDKWLHGLESQIQSDDYGKDLTSVNILLKKQQMLENQMEVRKKEIEELQSQAQALSQEGKSTDEVDSKRLTVQTKFMELLEPLNERKHNLLASKEIHQFNRDVEDEILWVGERMPLATSTDHGHNLQTVQLLIKKNQTLQKEIQGHQPRIDDIFERSQNIVTDSSSLSAEAIRQRLADLKQLWGLLIEETEKRHRRLEEAHRAQQYYFDAAEAEAWMSEQELYMMSEEKAKDEQSAVSMLKKHQILEQAVEDYAETVHQLSKTSRALVADSHPESERISMRQSKVDKLYAGLKDLAEERRGKLDERHRLFQLNREVDDLEQWIAEREVVAGSHELGQDYEHVTMLQERFREFARDTGNIGQERVDTVNHLADELINSGHSDAATIAEWKDGLNEAWADLLELIDTRTQILAASYELHKFYHDAKEIFGRIQDKHKKLPEELGRDQNTVETLQRMHTTFEHDIQALGTQVRQLQEDAARLQAAYAGDKADDIQKRENEVLEAWKSLLDACESRRVRLVDTGDKFRFFSMVRDLMLWMEDVIRQIEAQEKPRDVSSVELLMNNHQGIKAEIDARNDSFTTCIELGKSLLARKHYASEEIKEKLLQLTEKRKEMIDKWEDRWEWLRLILEVHQFSRDASVAEAWLLGQEPYLSSREIGQSVDEVEKLIKRHEAFEKSAATWDERFSALERLTTLELLEVRRQQEEEERKRRPPSPEPSTKVSEEAESQQQWDTSKGEQVSQNGLPAEQGSPRMAETVDTSEMVNGATEQRTSSKESSPIPSPTSDRKAKTALPAQSAATLPARTQETPSAQMEGFLNRKHEWEAHNKKASSRSWHNVYCVINNQEMGFYKDAKTAASGIPYHSEVPVSLKEAVCEVALDYKKKKHVFKLRLNDGNEYLFQAKDDEEMNTWIQAISSAISSDKHEVSASTQSTPASSRAQTLPTSVVTITSESSPGKREKDKEKDKEKRFSLFGKKK.

Thr2 is modified (N-acetylthreonine). An actin-binding region spans residues 2–275 (TTTVATDYDN…IITYVVTYYH (274 aa)). Ile14 and Ser36 each carry phosphoserine. Calponin-homology (CH) domains follow at residues 54–158 (AVQK…LRFQ) and 173–278 (KSAK…HYFS). Position 90 is an N6-acetyllysine (Lys90). A Phosphoserine modification is found at Ser228. 15 Spectrin repeats span residues 303-411 (MIEK…LALR), 423-525 (LARR…QRLE), 530-636 (LQKI…RLEE), 639-742 (RLWK…RLEE), 745-847 (LLHQ…ALQD), 850-952 (ALYK…DALL), 957-1060 (IQNY…SLGE), 1063-1166 (KLQQ…NLLS), 1170-1258 (AYQQ…DRHR), 1276-1376 (DLQK…AQRL), 1381-1482 (KAEL…HNLL), 1486-1590 (EIHQ…RLEE), 1592-1696 (HRAQ…KLDE), 1698-1801 (HRLF…TQIL), and 1805-1907 (YELH…RVRL). Phosphoserine is present on residues Ser817, Ser825, Ser903, Ser1057, Ser1076, Ser1079, and Ser1237. Phosphoserine occurs at positions 1388, 1447, and 1557. Positions 1563–2093 (IRQRLADLKQ…LLEVRRQQEE (531 aa)) are interaction with ANK2. A Phosphotyrosine modification is found at Tyr1805. An N6-acetyllysine mark is found at Lys1815, Lys1913, and Lys1989. 2 Spectrin repeats span residues 1914-2014 (FRFF…EWLR) and 2018-2097 (EVHQ…EERK). The disordered stretch occupies residues 2089–2196 (RQQEEEERKR…TLPARTQETP (108 aa)). Residues Ser2102, Ser2128, and Ser2138 each carry the phosphoserine modification. Over residues 2115–2131 (SQQQWDTSKGEQVSQNG) the composition is skewed to polar residues. A compositionally biased stretch (polar residues) spans 2145–2166 (VDTSEMVNGATEQRTSSKESSP). At Thr2147 the chain carries Phosphothreonine. At Ser2148 the chain carries Phosphoserine. The mediates interaction with CAMSAP1 stretch occupies residues 2149-2177 (EMVNGATEQRTSSKESSPIPSPTSDRKAK). A Phosphothreonine modification is found at Thr2159. Phosphoserine is present on residues Ser2160, Ser2161, Ser2164, Ser2165, and Ser2169. Thr2171 is subject to Phosphothreonine. Ser2172 and Ser2184 each carry phosphoserine. A compositionally biased stretch (polar residues) spans 2184–2196 (SAATLPARTQETP). Phosphothreonine occurs at positions 2187 and 2195. Residues 2197 to 2307 (SAQMEGFLNR…WIQAISSAIS (111 aa)) form the PH domain. Positions 2309-2364 (DKHEVSASTQSTPASSRAQTLPTSVVTITSESSPGKREKDKEKDKEKRFSLFGKKK) are disordered. Ser2314 and Ser2319 each carry phosphoserine. Over residues 2314–2341 (SASTQSTPASSRAQTLPTSVVTITSESS) the composition is skewed to polar residues. Thr2320 carries the post-translational modification Phosphothreonine. An O-linked (GlcNAc) serine glycan is attached at Ser2324. Thr2328 is modified (phosphothreonine). Phosphoserine occurs at positions 2340 and 2341. The span at 2342–2357 (PGKREKDKEKDKEKRF) shows a compositional bias: basic and acidic residues.

Belongs to the spectrin family. In terms of assembly, interacts with CAMSAP1. Interacts with ANK2. Interacts with CPNE4 (via VWFA domain). Like erythrocyte spectrin, the spectrin-like proteins are capable to form dimers which can further associate to tetramers. Can form heterodimers with SPTAN1. Isoform Short cannot bind to the axonal protein fodaxin. Isoform 2 is present in brain, lung and kidney (at protein level).

The protein resides in the cytoplasm. It localises to the cytoskeleton. It is found in the myofibril. The protein localises to the sarcomere. Its subcellular location is the m line. The protein resides in the cytosol. It localises to the cell membrane. Functionally, fodrin, which seems to be involved in secretion, interacts with calmodulin in a calcium-dependent manner and is thus candidate for the calcium-dependent movement of the cytoskeleton at the membrane. Plays a critical role in central nervous system development and function. The sequence is that of Spectrin beta chain, non-erythrocytic 1 (SPTBN1) from Homo sapiens (Human).